We begin with the raw amino-acid sequence, 323 residues long: HTH-type transcriptional regulator CysB (323 aa).

One can recognise an HTH lysR-type domain in the interval 1–60 (MKMHQLRYIVEIVNQNLNVTEAANALYTSQPGISKQVRLLEDELGLEIFERHGKHIKSIT). The segment at residues 19–38 (VTEAANALYTSQPGISKQVR) is a DNA-binding region (H-T-H motif).

This sequence belongs to the LysR transcriptional regulatory family. In terms of assembly, homotetramer.

The protein localises to the cytoplasm. In terms of biological role, this protein is a positive regulator of gene expression for the cysteine regulon. The inducer for CysB is N-acetylserine. The polypeptide is HTH-type transcriptional regulator CysB (cysB) (Haemophilus influenzae (strain ATCC 51907 / DSM 11121 / KW20 / Rd)).